A 464-amino-acid polypeptide reads, in one-letter code: MEEHYYVSIDIGSSSVKTIVGEKFHNGINVIGTGQTYTSGIKNGLIDDFDIARQAIKDTIKKASIASGVDIKDVFLKLPIIGTEVYDESNEIEFYEDTEIDGTHIESVLEGIRDKNDVPETEVINVFPIRFVVDKDNEVSDPKELIARHSLKVDAGVIAIQKSILINMIKCVEACGVDVLDVYSDAYNYGSILTPTEKELGACVIDIGEDLTQVAFYERGELVDAESIEMAGRDITDDIAQGLNTTYDTAEKVKHQYGHAFYDSASDQDVFSVDQVDSDEHVQYTQKDLSDFIEQRVEDIFFEVFDVLQELGLTKVNGGFVVTGGSANLLGVKELLQDMVSEKVRIHTPSQMGIRKPEFSSAISTISSSIAFDELLDYVTISYQDNEEFEEEVIESDKDSETKSSGFDWFKRKSNKKENDEVAPEAPREESYEDRENHLEDEQQTEGKAKEESKFKKLMKSLFE.

Residues 392–464 form a disordered region; that stretch reads EVIESDKDSE…FKKLMKSLFE (73 aa). Residues 416-455 are compositionally biased toward basic and acidic residues; it reads KKENDEVAPEAPREESYEDRENHLEDEQQTEGKAKEESKF.

Belongs to the FtsA/MreB family. In terms of assembly, self-interacts. Interacts with FtsZ.

The protein resides in the cell membrane. Functionally, cell division protein that is involved in the assembly of the Z ring. May serve as a membrane anchor for the Z ring. The sequence is that of Cell division protein FtsA from Staphylococcus epidermidis (strain ATCC 35984 / DSM 28319 / BCRC 17069 / CCUG 31568 / BM 3577 / RP62A).